The sequence spans 518 residues: Glutamate--cysteine ligase (518 aa).

This sequence belongs to the glutamate--cysteine ligase type 1 family. Type 1 subfamily.

It carries out the reaction L-cysteine + L-glutamate + ATP = gamma-L-glutamyl-L-cysteine + ADP + phosphate + H(+). It participates in sulfur metabolism; glutathione biosynthesis; glutathione from L-cysteine and L-glutamate: step 1/2. The protein is Glutamate--cysteine ligase of Salmonella arizonae (strain ATCC BAA-731 / CDC346-86 / RSK2980).